The following is an 860-amino-acid chain: Leucine--tRNA ligase (860 aa).

The 'HIGH' region motif lies at 42–52 (PYPSGRLHMGH). The short motif at 619 to 623 (KMSKS) is the 'KMSKS' region element. Lys622 contributes to the ATP binding site.

It belongs to the class-I aminoacyl-tRNA synthetase family.

The protein resides in the cytoplasm. It catalyses the reaction tRNA(Leu) + L-leucine + ATP = L-leucyl-tRNA(Leu) + AMP + diphosphate. This is Leucine--tRNA ligase from Mannheimia succiniciproducens (strain KCTC 0769BP / MBEL55E).